A 551-amino-acid chain; its full sequence is High-affinity glucose transporter (551 aa).

The Cytoplasmic segment spans residues 1-27 (MSLKNWLLLRDIQYEGTFYKKFPHVYN). Residues 28 to 48 (IYVIGFIACISGLMFGFDIAS) form a helical membrane-spanning segment. Topologically, residues 49-70 (MSSMIGTDVYKDYFSNPDSLTY) are extracellular. A helical transmembrane segment spans residues 71-91 (GGITASMAGGSFLGSLISPNF). At 92–98 (SDAFGRK) the chain is on the cytoplasmic side. A helical membrane pass occupies residues 99 to 119 (VSLHICAALWIIGAILQCAAQ). The Extracellular segment spans residues 120-123 (DQAM). A helical transmembrane segment spans residues 124 to 144 (LIVGRVISGMGIGFGSSAAPV). At 145–155 (YCSEISPPKIR) the chain is on the cytoplasmic side. A helical transmembrane segment spans residues 156-176 (GTISGLFQFSVTVGIMVLFYI). Over 177-190 (GYGCHFIDGAAAFR) the chain is Extracellular. The chain crosses the membrane as a helical span at residues 191 to 211 (ITWGLQMVPGLILMVGVFFIP). Residues 212-289 (ESPRWLANHD…VGVSAQMWQQ (78 aa)) are Cytoplasmic-facing. A helical membrane pass occupies residues 290–310 (LCGMNVMMYYIVYIFNMAGYT). Topologically, residues 311–315 (GNTNL) are extracellular. Residues 316 to 336 (VASSIQYVLNVVMTIPALFLI) traverse the membrane as a helical segment. The Cytoplasmic segment spans residues 337–343 (DKFGRRP). Residues 344–364 (VLIIGGIFMFTWLFSVAGILA) form a helical membrane-spanning segment. Residues 365-395 (TYSVPAPGGVNGDDTVTIQIPSENTSAANGV) lie on the Extracellular side of the membrane. Asn-388 carries N-linked (GlcNAc...) asparagine glycosylation. The helical transmembrane segment at 396–416 (IASSYLFVCFFAPTWGIGIWI) threads the bilayer. Over 417–432 (YCSEIFNNMERAKGSA) the chain is Cytoplasmic. Residues 433–453 (LSAATNWAFNFALAMFVPSAF) traverse the membrane as a helical segment. Residues 454–459 (KNISWK) are Extracellular-facing. Residues 460 to 480 (TYIIFGVFSVALTIQTFFMFP) form a helical membrane-spanning segment. Topologically, residues 481-551 (ETKGKTLEEI…DRSDSASNSN (71 aa)) are cytoplasmic.

The protein belongs to the major facilitator superfamily. Sugar transporter (TC 2.A.1.1) family.

The protein localises to the membrane. Functionally, high-affinity glucose transporter. In Kluyveromyces lactis (strain ATCC 8585 / CBS 2359 / DSM 70799 / NBRC 1267 / NRRL Y-1140 / WM37) (Yeast), this protein is High-affinity glucose transporter (HGT1).